The chain runs to 442 residues: Tubulin beta chain (442 aa).

Residues Gln-11, Glu-69, Ser-138, Gly-142, Thr-143, Gly-144, Asn-204, and Asn-226 each coordinate GTP. Glu-69 provides a ligand contact to Mg(2+).

It belongs to the tubulin family. Dimer of alpha and beta chains. A typical microtubule is a hollow water-filled tube with an outer diameter of 25 nm and an inner diameter of 15 nM. Alpha-beta heterodimers associate head-to-tail to form protofilaments running lengthwise along the microtubule wall with the beta-tubulin subunit facing the microtubule plus end conferring a structural polarity. Microtubules usually have 13 protofilaments but different protofilament numbers can be found in some organisms and specialized cells. It depends on Mg(2+) as a cofactor.

The protein resides in the cytoplasm. Its subcellular location is the cytoskeleton. Its function is as follows. Tubulin is the major constituent of microtubules, a cylinder consisting of laterally associated linear protofilaments composed of alpha- and beta-tubulin heterodimers. Microtubules grow by the addition of GTP-tubulin dimers to the microtubule end, where a stabilizing cap forms. Below the cap, tubulin dimers are in GDP-bound state, owing to GTPase activity of alpha-tubulin. This is Tubulin beta chain (TUB-B) from Pneumocystis carinii.